The primary structure comprises 456 residues: MLNNAMSVVILAAGKGTRMYSDLPKVLHTLAGKAMVQHVIDAANELGAAHVHLVYGHGGDLLKQALKDDNLNWVLQAEQLGTGHAMQQAAPFFADDEDILMLYGDVPLISVETLQRLRDAKPQGGIGLLTVKLDDPTGYGRITRENGKVTGIVEHKDATDEQRQIQEINTGILIANGADMKRWLAKLTNNNAQGEYYITDIIALAYQEGREIVAVHPQRLSEVEGVNNRLQLSRLERVYQSEQAEKLLLAGVMLRDPARFDLRGTLTHGRDVEIDTNVIIEGNVTLGHRVKIGSGCVIKNSVIGDDCEISPYTVVEDANLAAACTIGPFARLRPGAELLEGAHVGNFVEMKKARLGKGSKAGHLTYLGDAEIGDNVNIGAGTITCNYDGANKFKTIIGDDVFVGSDTQLVAPVTVGKGATIAAGTTVTRNVGENALAISRVPQTQKEGWRRPVKKK.

Residues Met-1 to Arg-229 are pyrophosphorylase. UDP-N-acetyl-alpha-D-glucosamine is bound by residues Leu-11 to Gly-14, Lys-25, Gln-76, Gly-81 to Thr-82, Tyr-103 to Asp-105, Gly-140, Glu-154, Asn-169, and Asn-227. Asp-105 contacts Mg(2+). Asn-227 is a Mg(2+) binding site. The interval Leu-230–Ala-250 is linker. The segment at Gly-251–Lys-456 is N-acetyltransferase. UDP-N-acetyl-alpha-D-glucosamine is bound by residues Arg-333 and Lys-351. Residue His-363 is the Proton acceptor of the active site. Residues Tyr-366 and Asn-377 each coordinate UDP-N-acetyl-alpha-D-glucosamine. Acetyl-CoA contacts are provided by residues Ala-380, Asn-386–Tyr-387, Ser-405, Ala-423, and Arg-440.

It in the N-terminal section; belongs to the N-acetylglucosamine-1-phosphate uridyltransferase family. In the C-terminal section; belongs to the transferase hexapeptide repeat family. Homotrimer. The cofactor is Mg(2+).

The protein localises to the cytoplasm. It catalyses the reaction alpha-D-glucosamine 1-phosphate + acetyl-CoA = N-acetyl-alpha-D-glucosamine 1-phosphate + CoA + H(+). The catalysed reaction is N-acetyl-alpha-D-glucosamine 1-phosphate + UTP + H(+) = UDP-N-acetyl-alpha-D-glucosamine + diphosphate. It participates in nucleotide-sugar biosynthesis; UDP-N-acetyl-alpha-D-glucosamine biosynthesis; N-acetyl-alpha-D-glucosamine 1-phosphate from alpha-D-glucosamine 6-phosphate (route II): step 2/2. It functions in the pathway nucleotide-sugar biosynthesis; UDP-N-acetyl-alpha-D-glucosamine biosynthesis; UDP-N-acetyl-alpha-D-glucosamine from N-acetyl-alpha-D-glucosamine 1-phosphate: step 1/1. The protein operates within bacterial outer membrane biogenesis; LPS lipid A biosynthesis. Functionally, catalyzes the last two sequential reactions in the de novo biosynthetic pathway for UDP-N-acetylglucosamine (UDP-GlcNAc). The C-terminal domain catalyzes the transfer of acetyl group from acetyl coenzyme A to glucosamine-1-phosphate (GlcN-1-P) to produce N-acetylglucosamine-1-phosphate (GlcNAc-1-P), which is converted into UDP-GlcNAc by the transfer of uridine 5-monophosphate (from uridine 5-triphosphate), a reaction catalyzed by the N-terminal domain. The protein is Bifunctional protein GlmU of Escherichia coli O157:H7 (strain EC4115 / EHEC).